A 58-amino-acid polypeptide reads, in one-letter code: UPF0434 protein Sfri_2386 (58 aa).

The protein belongs to the UPF0434 family.

The polypeptide is UPF0434 protein Sfri_2386 (Shewanella frigidimarina (strain NCIMB 400)).